Reading from the N-terminus, the 431-residue chain is Tyrosine--tRNA ligase (431 aa).

Y33 serves as a coordination point for L-tyrosine. Residues 38 to 47 (PTADSLHIGS) carry the 'HIGH' region motif. L-tyrosine contacts are provided by Y172 and Q176. The short motif at 234-238 (KFGKS) is the 'KMSKS' region element. ATP is bound at residue K237. In terms of domain architecture, S4 RNA-binding spans 364–431 (LDIVTVLNEK…KKNYFVIRVV (68 aa)).

This sequence belongs to the class-I aminoacyl-tRNA synthetase family. TyrS type 1 subfamily. Homodimer.

The protein resides in the cytoplasm. It catalyses the reaction tRNA(Tyr) + L-tyrosine + ATP = L-tyrosyl-tRNA(Tyr) + AMP + diphosphate + H(+). Catalyzes the attachment of tyrosine to tRNA(Tyr) in a two-step reaction: tyrosine is first activated by ATP to form Tyr-AMP and then transferred to the acceptor end of tRNA(Tyr). This Flavobacterium johnsoniae (strain ATCC 17061 / DSM 2064 / JCM 8514 / BCRC 14874 / CCUG 350202 / NBRC 14942 / NCIMB 11054 / UW101) (Cytophaga johnsonae) protein is Tyrosine--tRNA ligase.